Consider the following 312-residue polypeptide: Ribosomal RNA small subunit methyltransferase H (312 aa).

S-adenosyl-L-methionine contacts are provided by residues 35-37, aspartate 55, phenylalanine 79, aspartate 100, and glutamine 107; that span reads GGH.

This sequence belongs to the methyltransferase superfamily. RsmH family.

Its subcellular location is the cytoplasm. The catalysed reaction is cytidine(1402) in 16S rRNA + S-adenosyl-L-methionine = N(4)-methylcytidine(1402) in 16S rRNA + S-adenosyl-L-homocysteine + H(+). Specifically methylates the N4 position of cytidine in position 1402 (C1402) of 16S rRNA. This Azoarcus sp. (strain BH72) protein is Ribosomal RNA small subunit methyltransferase H.